Here is a 445-residue protein sequence, read N- to C-terminus: Cryptochrome DASH (445 aa).

Residues 4–137 (KIGLYWFTFD…VIVQHSVRSL (134 aa)) enclose the Photolyase/cryptochrome alpha/beta domain.

The protein belongs to the DNA photolyase class-1 family. The cofactor is FAD. It depends on (6R)-5,10-methylene-5,6,7,8-tetrahydrofolate as a cofactor.

Functionally, may have a photoreceptor function. Binds DNA; probably functions as a transcriptional repressor. This Vibrio parahaemolyticus serotype O3:K6 (strain RIMD 2210633) protein is Cryptochrome DASH (cry).